The primary structure comprises 229 residues: Sorting nexin-10A (229 aa).

Residues 11–128 (FISVWVRDPQ…HLFLQSQLSI (118 aa)) form the PX domain. R54 and R95 together coordinate a 1,2-diacyl-sn-glycero-3-phospho-(1D-myo-inositol-3-phosphate).

It belongs to the sorting nexin family.

The protein resides in the cytoplasm. Its subcellular location is the endosome membrane. It is found in the cytoskeleton. The protein localises to the microtubule organizing center. It localises to the centrosome. In terms of biological role, probable phosphoinositide-binding protein involved in protein sorting and membrane trafficking in endosomes. May play a role in cilium biogenesis through regulation of the transport and the localization of proteins to the cilium. The protein is Sorting nexin-10A (snx10a) of Danio rerio (Zebrafish).